The primary structure comprises 242 residues: Segregation and condensation protein A (242 aa).

The protein belongs to the ScpA family. As to quaternary structure, component of a cohesin-like complex composed of ScpA, ScpB and the Smc homodimer, in which ScpA and ScpB bind to the head domain of Smc. The presence of the three proteins is required for the association of the complex with DNA.

It is found in the cytoplasm. Its function is as follows. Participates in chromosomal partition during cell division. May act via the formation of a condensin-like complex containing Smc and ScpB that pull DNA away from mid-cell into both cell halves. This Streptococcus pneumoniae serotype 4 (strain ATCC BAA-334 / TIGR4) protein is Segregation and condensation protein A.